A 1106-amino-acid chain; its full sequence is DNA polymerase delta catalytic subunit (1106 aa).

Residues 1–28 (MDGKRRPGPGPGVPPKRARGGLWDEDEA) form a disordered region. Residues 4–19 (KRRPGPGPGVPPKRAR) carry the Nuclear localization signal motif. Arg-19 bears the Omega-N-methylarginine mark. Lys-573 participates in a covalent cross-link: Glycyl lysine isopeptide (Lys-Gly) (interchain with G-Cter in SUMO2). Positions 1011, 1014, 1025, and 1028 each coordinate Zn(2+). The CysA-type zinc finger occupies 1011-1028 (CIGCRTVLSHQGAVCKFC). [4Fe-4S] cluster contacts are provided by Cys-1057, Cys-1060, Cys-1070, and Cys-1075. Residues 1057–1075 (CQRCQGSLHEDVICTSRDC) carry the CysB motif motif.

Belongs to the DNA polymerase type-B family. As to quaternary structure, component of the tetrameric DNA polymerase delta complex (Pol-delta4), which consists of POLD1/p125, POLD2/p50, POLD3/p66/p68 and POLD4/p12, with POLD1 bearing both DNA polymerase and 3' to 5' proofreading exonuclease activities. Within Pol-delta4, directly interacts with POLD2 and POLD4. Following genotoxic stress by DNA-damaging agents, such as ultraviolet light and methyl methanesulfonate, or by replication stress induced by treatment with hydroxyurea or aphidicolin, Pol-delta4 is converted into a trimeric form of the complex (Pol-delta3) by POLD4 degradation. Pol-delta3 is the major form at S phase replication sites and DNA damage sites. POLD1 displays different catalytic properties depending upon the complex it is found in. It exhibits higher proofreading activity and fidelity than Pol-delta4, making it particularly well suited to respond to DNA damage. Directly interacts with PCNA, as do POLD3 and POLD4; this interaction stimulates Pol-delta4 polymerase activity. As POLD2 and POLD4, directly interacts with WRNIP1; this interaction stimulates DNA polymerase delta-mediated DNA synthesis, independently of the presence of PCNA. This stimulation may be due predominantly to an increase of initiation frequency and also to increased processivity. Also observed as a dimeric complex with POLD2 (Pol-delta2). Pol-delta2 is relatively insensitive to the PCNA stimulation (2-5-fold) compared to Pol-delta4 that is stimulated by over 50-fold. Interacts with POLDIP2; this interaction is indirect and most probably mediated through POLD2-binding. Interacts with CIAO1. Interacts with POLDIP2. Interacts with RFC1. It depends on [4Fe-4S] cluster as a cofactor.

The protein resides in the nucleus. It catalyses the reaction DNA(n) + a 2'-deoxyribonucleoside 5'-triphosphate = DNA(n+1) + diphosphate. Its activity is regulated as follows. Regulated by alteration of quaternary structure. Exhibits burst rates of DNA synthesis are about 5 times faster in the presence of POLD4 (Pol-delta4 complex) than in its absence (Pol-delta3 complex), while the affinity of the enzyme for its DNA and dNTP substrates appears unchanged. The Pol-delta3 complex is more likely to proofread DNA synthesis because it cleaves single-stranded DNA twice as fast and transfers mismatched DNA from the polymerase to the exonuclease sites 9 times faster compared to the Pol-delta3 complex. Pol-delta3 also extends mismatched primers 3 times more slowly in the absence of POLD4. The conversion of Pol-delta4 into Pol-delta3 is induced by genotoxic stress or by replication stress leading POLD4 degradation. Stimulated in the presence of PCNA. This stimulation is further increased in the presence of KCTD13/PDIP1, most probably via direct interaction between KCTD13 and POLD2. As the catalytic component of the trimeric (Pol-delta3 complex) and tetrameric DNA polymerase delta complexes (Pol-delta4 complex), plays a crucial role in high fidelity genome replication, including in lagging strand synthesis, and repair. Exhibits both DNA polymerase and 3'- to 5'-exonuclease activities. Requires the presence of accessory proteins POLD2, POLD3 and POLD4 for full activity. Depending upon the absence (Pol-delta3) or the presence of POLD4 (Pol-delta4), displays differences in catalytic activity. Most notably, expresses higher proofreading activity in the context of Pol-delta3 compared with that of Pol-delta4. Although both Pol-delta3 and Pol-delta4 process Okazaki fragments in vitro, Pol-delta3 may be better suited to fulfill this task, exhibiting near-absence of strand displacement activity compared to Pol-delta4 and stalling on encounter with the 5'-blocking oligonucleotides. Pol-delta3 idling process may avoid the formation of a gap, while maintaining a nick that can be readily ligated. Along with DNA polymerase kappa, DNA polymerase delta carries out approximately half of nucleotide excision repair (NER) synthesis following UV irradiation. Under conditions of DNA replication stress, in the presence of POLD3 and POLD4, may catalyze the repair of broken replication forks through break-induced replication (BIR). Involved in the translesion synthesis (TLS) of templates carrying O6-methylguanine, 8oxoG or abasic sites. The polypeptide is DNA polymerase delta catalytic subunit (POLD1) (Bos taurus (Bovine)).